The sequence spans 56 residues: Large ribosomal subunit protein bL32 (56 aa).

The tract at residues M1–G34 is disordered.

This sequence belongs to the bacterial ribosomal protein bL32 family.

The protein is Large ribosomal subunit protein bL32 of Baumannia cicadellinicola subsp. Homalodisca coagulata.